The following is a 456-amino-acid chain: Hydroxymethylglutaryl-CoA synthase ERG13 (456 aa).

(3S)-3-hydroxy-3-methylglutaryl-CoA is bound at residue Ala35. Glu86 acts as the Proton donor/acceptor in catalysis. The (3S)-3-hydroxy-3-methylglutaryl-CoA site is built by Cys118, Asn156, Thr160, Ser210, His259, Lys268, Asn336, and Ser370. The active-site Acyl-thioester intermediate is the Cys118. The active-site Proton donor/acceptor is the His259.

This sequence belongs to the thiolase-like superfamily. HMG-CoA synthase family.

It catalyses the reaction acetoacetyl-CoA + acetyl-CoA + H2O = (3S)-3-hydroxy-3-methylglutaryl-CoA + CoA + H(+). It functions in the pathway metabolic intermediate biosynthesis; (R)-mevalonate biosynthesis; (R)-mevalonate from acetyl-CoA: step 2/3. Functionally, hydroxymethylglutaryl-CoA synthase; part of the first module of ergosterol biosynthesis pathway that includes the early steps of the pathway, conserved across all eukaryotes, and which results in the formation of mevalonate from acetyl-coenzyme A (acetyl-CoA). ERG13 condenses acetyl-CoA with acetoacetyl-CoA to form hydroxymethylglutaryl-CoA (HMG-CoA). The first module starts with the action of the cytosolic acetyl-CoA acetyltransferase ERG10B that catalyzes the formation of acetoacetyl-CoA. The hydroxymethylglutaryl-CoA synthases ERG13 then condenses acetyl-CoA with acetoacetyl-CoA to form HMG-CoA. The rate-limiting step of the early module is the reduction to mevalonate by the 3-hydroxy-3-methylglutaryl-coenzyme A (HMG-CoA) reductases HMG1. This Gibberella zeae (strain ATCC MYA-4620 / CBS 123657 / FGSC 9075 / NRRL 31084 / PH-1) (Wheat head blight fungus) protein is Hydroxymethylglutaryl-CoA synthase ERG13.